The primary structure comprises 224 residues: UPF0441 protein PC1_0312 (224 aa).

Residues 178-224 form a disordered region; the sequence is PKTALAPKPATTSTITRGGFGETVAKQNSMQRSSASSSSSSSRSMGG. Residues 209–224 show a composition bias toward low complexity; sequence RSSASSSSSSSRSMGG.

Belongs to the UPF0441 family.

This Pectobacterium carotovorum subsp. carotovorum (strain PC1) protein is UPF0441 protein PC1_0312.